Here is a 242-residue protein sequence, read N- to C-terminus: Segregation and condensation protein A (242 aa).

It belongs to the ScpA family. As to quaternary structure, component of a cohesin-like complex composed of ScpA, ScpB and the Smc homodimer, in which ScpA and ScpB bind to the head domain of Smc. The presence of the three proteins is required for the association of the complex with DNA.

Its subcellular location is the cytoplasm. Participates in chromosomal partition during cell division. May act via the formation of a condensin-like complex containing Smc and ScpB that pull DNA away from mid-cell into both cell halves. This is Segregation and condensation protein A from Lactococcus lactis subsp. cremoris (strain SK11).